Consider the following 73-residue polypeptide: UPF0352 protein APJL_0577 (73 aa).

This sequence belongs to the UPF0352 family.

This chain is UPF0352 protein APJL_0577, found in Actinobacillus pleuropneumoniae serotype 3 (strain JL03).